We begin with the raw amino-acid sequence, 438 residues long: Dol-P-Man:Man(5)GlcNAc(2)-PP-Dol alpha-1,3-mannosyltransferase (438 aa).

Ser-13 is modified (phosphoserine). The next 11 helical transmembrane spans lie at 41–61, 95–115, 123–143, 149–169, 172–192, 203–223, 231–251, 289–309, 332–352, 356–376, and 407–427; these read YTLL…FWVI, TGPL…FYAT, MAQN…FLIY, VPPF…SIFV, LFND…FLAQ, LAVS…FLLL, ALPK…PFLL, FHLA…LCRW, ALTP…GICF, LHYQ…WAMP, and AALH…PESF.

Belongs to the glycosyltransferase ALG3 family.

The protein resides in the endoplasmic reticulum membrane. It carries out the reaction an alpha-D-Man-(1-&gt;2)-alpha-D-Man-(1-&gt;2)-alpha-D-Man-(1-&gt;3)-[alpha-D-Man-(1-&gt;6)]-beta-D-Man-(1-&gt;4)-beta-D-GlcNAc-(1-&gt;4)-alpha-D-GlcNAc-diphospho-di-trans,poly-cis-dolichol + a di-trans,poly-cis-dolichyl beta-D-mannosyl phosphate = an alpha-D-Man-(1-&gt;2)-alpha-D-Man-(1-&gt;2)-alpha-D-Man-(1-&gt;3)-[alpha-D-Man-(1-&gt;3)-alpha-D-Man-(1-&gt;6)]-beta-D-Man-(1-&gt;4)-beta-D-GlcNAc-(1-&gt;4)-alpha-D-GlcNAc-diphospho-di-trans,poly-cis-dolichol + a di-trans,poly-cis-dolichyl phosphate + H(+). The protein operates within protein modification; protein glycosylation. In terms of biological role, dol-P-Man:Man(5)GlcNAc(2)-PP-Dol alpha-1,3-mannosyltransferase that operates in the biosynthetic pathway of dolichol-linked oligosaccharides, the glycan precursors employed in protein asparagine (N)-glycosylation. The assembly of dolichol-linked oligosaccharides begins on the cytosolic side of the endoplasmic reticulum membrane and finishes in its lumen. The sequential addition of sugars to dolichol pyrophosphate produces dolichol-linked oligosaccharides containing fourteen sugars, including two GlcNAcs, nine mannoses and three glucoses. Once assembled, the oligosaccharide is transferred from the lipid to nascent proteins by oligosaccharyltransferases. In the lumen of the endoplasmic reticulum, adds the first dolichyl beta-D-mannosyl phosphate derived mannose in an alpha-1,3 linkage to Man(5)GlcNAc(2)-PP-dolichol to produce Man(6)GlcNAc(2)-PP-dolichol. Man(6)GlcNAc(2)-PP-dolichol is a substrate for ALG9, the following enzyme in the biosynthetic pathway. The polypeptide is Dol-P-Man:Man(5)GlcNAc(2)-PP-Dol alpha-1,3-mannosyltransferase (Mus musculus (Mouse)).